The following is a 299-amino-acid chain: Ophiobolin family sesterterpenoid biosynthesis cluster acetyltransferase (299 aa).

The first 20 residues, 1–20, serve as a signal peptide directing secretion; the sequence is MYFFRALLSPVVLWPALVSG. N-linked (GlcNAc...) asparagine glycans are attached at residues Asn-28, Asn-58, Asn-77, Asn-126, Asn-177, Asn-212, and Asn-282.

The protein belongs to the bfoA family.

Its pathway is secondary metabolite biosynthesis; terpenoid biosynthesis. Acetyltransferase; part of the gene cluster that mediates the biosynthesis of an ophiobolin family sesterterpenoid. Its function is as follows. Sesterterpenoid synthase; part of the gene cluster that mediates the biosynthesis of an ophiobolin family sesterterpenoid. The polypeptide is Ophiobolin family sesterterpenoid biosynthesis cluster acetyltransferase (Aspergillus terreus).